A 410-amino-acid polypeptide reads, in one-letter code: UPF0761 membrane protein Csal_1895 (410 aa).

Transmembrane regions (helical) follow at residues 43 to 63, 99 to 119, 139 to 159, 180 to 200, 212 to 232, and 247 to 267; these read LFAV…IPSF, SLTL…MVTV, FLLY…GFLL, VAFL…FIYM, AVAG…AFSL, and FAAV…VLVG.

This sequence belongs to the UPF0761 family.

The protein resides in the cell inner membrane. This chain is UPF0761 membrane protein Csal_1895, found in Chromohalobacter salexigens (strain ATCC BAA-138 / DSM 3043 / CIP 106854 / NCIMB 13768 / 1H11).